A 158-amino-acid chain; its full sequence is Small ribosomal subunit protein uS7 (158 aa).

The protein belongs to the universal ribosomal protein uS7 family. As to quaternary structure, part of the 30S ribosomal subunit. Contacts proteins S9 and S11.

In terms of biological role, one of the primary rRNA binding proteins, it binds directly to 16S rRNA where it nucleates assembly of the head domain of the 30S subunit. Is located at the subunit interface close to the decoding center, probably blocks exit of the E-site tRNA. This Gluconobacter oxydans (strain 621H) (Gluconobacter suboxydans) protein is Small ribosomal subunit protein uS7.